The chain runs to 432 residues: Probable protein phosphatase 2C 33 (432 aa).

One can recognise a PPM-type phosphatase domain in the interval 27 to 298; that stretch reads GGGSERPLVR…DDTTCVVVDI (272 aa). Residues Asp-74, Gly-75, Asp-250, and Asp-289 each contribute to the Mn(2+) site.

Belongs to the PP2C family. It depends on Mg(2+) as a cofactor. Mn(2+) serves as cofactor.

The catalysed reaction is O-phospho-L-seryl-[protein] + H2O = L-seryl-[protein] + phosphate. It catalyses the reaction O-phospho-L-threonyl-[protein] + H2O = L-threonyl-[protein] + phosphate. The protein is Probable protein phosphatase 2C 33 of Oryza sativa subsp. japonica (Rice).